A 404-amino-acid chain; its full sequence is LL-diaminopimelate aminotransferase (404 aa).

2 residues coordinate substrate: Tyr15 and Gly42. Pyridoxal 5'-phosphate-binding positions include Tyr72, 108–109 (AK), Tyr132, Asn188, Tyr219, and 247–249 (SFS). Substrate-binding residues include Lys109, Tyr132, and Asn188. Lys250 is modified (N6-(pyridoxal phosphate)lysine). Residues Arg258 and Asn288 each contribute to the pyridoxal 5'-phosphate site. Substrate-binding residues include Asn288 and Arg384.

This sequence belongs to the class-I pyridoxal-phosphate-dependent aminotransferase family. LL-diaminopimelate aminotransferase subfamily. Homodimer. The cofactor is pyridoxal 5'-phosphate.

The catalysed reaction is (2S,6S)-2,6-diaminopimelate + 2-oxoglutarate = (S)-2,3,4,5-tetrahydrodipicolinate + L-glutamate + H2O + H(+). It functions in the pathway amino-acid biosynthesis; L-lysine biosynthesis via DAP pathway; LL-2,6-diaminopimelate from (S)-tetrahydrodipicolinate (aminotransferase route): step 1/1. In terms of biological role, involved in the synthesis of meso-diaminopimelate (m-DAP or DL-DAP), required for both lysine and peptidoglycan biosynthesis. Catalyzes the direct conversion of tetrahydrodipicolinate to LL-diaminopimelate. In Lachnospira eligens (strain ATCC 27750 / DSM 3376 / VPI C15-48 / C15-B4) (Eubacterium eligens), this protein is LL-diaminopimelate aminotransferase.